The following is a 155-amino-acid chain: Ribosome maturation factor RimP (155 aa).

It belongs to the RimP family.

The protein resides in the cytoplasm. In terms of biological role, required for maturation of 30S ribosomal subunits. The chain is Ribosome maturation factor RimP from Prochlorococcus marinus (strain MIT 9211).